Consider the following 210-residue polypeptide: 7-carboxy-7-deazaguanine synthase (210 aa).

Substrate-binding positions include 12–14 (LQG) and R27. Residues 18-210 (NAGRPAVFCR…MQTHKYLNIP (193 aa)) enclose the Radical SAM core domain. [4Fe-4S] cluster contacts are provided by C31, C46, and C49. Residue 48–50 (FCD) participates in S-adenosyl-L-methionine binding. Residue T51 participates in Mg(2+) binding. Residue T90 coordinates substrate. S-adenosyl-L-methionine-binding positions include G92, 133–135 (SPK), and 173–176 (QPMD). P210 contacts substrate.

This sequence belongs to the radical SAM superfamily. 7-carboxy-7-deazaguanine synthase family. Homodimer. [4Fe-4S] cluster serves as cofactor. The cofactor is S-adenosyl-L-methionine. Requires Mg(2+) as cofactor.

It carries out the reaction 6-carboxy-5,6,7,8-tetrahydropterin + H(+) = 7-carboxy-7-deazaguanine + NH4(+). The protein operates within purine metabolism; 7-cyano-7-deazaguanine biosynthesis. Functionally, catalyzes the complex heterocyclic radical-mediated conversion of 6-carboxy-5,6,7,8-tetrahydropterin (CPH4) to 7-carboxy-7-deazaguanine (CDG), a step common to the biosynthetic pathways of all 7-deazapurine-containing compounds. In Burkholderia multivorans (strain ATCC 17616 / 249), this protein is 7-carboxy-7-deazaguanine synthase.